We begin with the raw amino-acid sequence, 949 residues long: Coiled-coil domain-containing protein 80 (949 aa).

The N-terminal stretch at 1–22 is a signal peptide; sequence MMWKMGPHFTTLLAMWLVCGSA. 3 disordered regions span residues 24 to 79, 112 to 132, and 289 to 610; these read HSPA…RRKS, SSAR…MLRF, and HVVQ…PKKS. The span at 112–123 shows a compositional bias: basic and acidic residues; sequence SSAREMVRDEGS. Positions 295–307 are enriched in gly residues; it reads NEGGGGAGGTGLG. Over residues 308-328 the composition is skewed to basic and acidic residues; that stretch reads GDKRKEDPRRTQVHPTREAPR. The span at 345-380 shows a compositional bias: low complexity; it reads RATTLPPAPVTTATRATSRVVTIAARPTTTTAYPAT. The span at 419–429 shows a compositional bias: basic and acidic residues; it reads PRKEQQREKPQ. Residues 436 to 445 are compositionally biased toward polar residues; the sequence is KATNYGSFTA. Positions 463–477 are enriched in basic and acidic residues; that stretch reads RFRDNRTDKREHGHQ. N-linked (GlcNAc...) asparagine glycosylation occurs at asparagine 467. The segment covering 487 to 498 has biased composition (basic residues); sequence KPVKGKLPKKKD. 3 stretches are compositionally biased toward basic and acidic residues: residues 499–510, 534–548, and 556–581; these read RILSNEYEDKYD, KESK…PEKE, and AKQD…EKDK. Glycyl lysine isopeptide (Lys-Gly) (interchain with G-Cter in SUMO2) cross-links involve residues lysine 544 and lysine 547. Residues 554–587 are a coiled coil; sequence KSAKQDKLLKSEKQAKKAEKKTKQEKDKNKKKKA.

Belongs to the CCDC80 family. In terms of assembly, binds to various extracellular matrix proteins. Post-translationally, phosphorylated. In terms of tissue distribution, expressed in brain, stomach, colon, rectum, liver, lung, kidney, adipocytes and testis.

It is found in the secreted. Its subcellular location is the extracellular space. The protein localises to the extracellular matrix. Promotes cell adhesion and matrix assembly. The sequence is that of Coiled-coil domain-containing protein 80 (Ccdc80) from Mus musculus (Mouse).